The primary structure comprises 5911 residues: Nonribosomal peptide synthetase 30 (5911 aa).

The interval 1 to 22 (MVPEKPTAQSKSGIGEPFRAGD) is disordered. The interval 352–754 (ALIQPSSTAV…GRKDAQVKIR (403 aa)) is adenylation 1. The Carrier 1 domain maps to 891–968 (PRPFSVEYSL…EAAAIVARGT (78 aa)). Serine 928 is subject to O-(pantetheine 4'-phosphoryl)serine. The tract at residues 1007 to 1422 (EDAFPCTPLQ…ERLIFVIDQL (416 aa)) is condensation 1. The tract at residues 1467–1865 (ERALSQPDRP…SLMFVGRKAD (399 aa)) is adenylation 2. One can recognise a Carrier 2 domain in the interval 2001-2077 (QPTSELEAEM…NICSHSYYCS (77 aa)). Serine 2038 carries the O-(pantetheine 4'-phosphoryl)serine modification. A condensation 2 region spans residues 2121-2538 (QDAYPCTPLQ…GPDINMSDIG (418 aa)). The interval 2568 to 2977 (EEQARLRPEA…GRKDSQVKIR (410 aa)) is adenylation 3. Residues 3110–3186 (QPSTNAQREL…LIADNSKSIK (77 aa)) form the Carrier 3 domain. O-(pantetheine 4'-phosphoryl)serine is present on serine 3147. Residues 3227 to 3652 (VQDAYPCTPL…LELVIQAFMA (426 aa)) are condensation 3. The adenylation 4 stretch occupies residues 3701–4108 (EERVREQPNA…GRKDSQVKIR (408 aa)). Residues 4248-4325 (PPTTPLECQM…DIIATMTKNK (78 aa)) form the Carrier 4 domain. Serine 4285 carries the O-(pantetheine 4'-phosphoryl)serine modification. Residues 4326–4347 (ATGASRRLPRDDDEPIPHTKYA) are disordered. A condensation 4 region spans residues 4353–4793 (SYAQGRLWFL…SLPLLTEDGR (441 aa)). Residues 4819 to 5231 (FKEQVSRHPN…GRMDVQVKIR (413 aa)) are adenylation 5. The 77-residue stretch at 5360 to 5436 (KPTTDMEVAL…ALARRQEEIV (77 aa)) folds into the Carrier 5 domain. The residue at position 5397 (serine 5397) is an O-(pantetheine 4'-phosphoryl)serine. Positions 5474–5828 (VEDMLPLTSM…GIKMKLHFFT (355 aa)) are condensation 5.

This sequence belongs to the NRP synthetase family.

It participates in secondary metabolite biosynthesis. In terms of biological role, nonribosomal peptide synthetase; part of the gene cluster that mediates the biosynthesis of sansalvamide, a cyclic pentadepsipeptide that shows promising results as potential anti-cancer drug. The nonribosmal peptide synthetase NRPS30 produces sansalvamide by incorporating successively one phenylalanine, one leucine, one alpha-hydroxyisocaproic acid (HICA), one valine and one leucine before sansalvamide is released from by cyclization by the terminal C domain of NRPS30. The HICA residue is probably provided by reduction of alpha-ketoisocaproate by the cluster-specific aldo-keto reductase (NECHADRAFT_45914). This Fusarium vanettenii (strain ATCC MYA-4622 / CBS 123669 / FGSC 9596 / NRRL 45880 / 77-13-4) (Fusarium solani subsp. pisi) protein is Nonribosomal peptide synthetase 30.